The primary structure comprises 228 residues: MRSGVIAQKVGMTRVYNDAGEHIPVTVLRLENCQVVSHRTEEKNGYTAVQLGAGRSKVKNTPKAMRGHFAAASVEPKAKLVEFRVSADNLIDIGAELTAGHFVAGQLVDVTGTTIGKGFAGAIKRHNFGGLRATHGVSVSHRSHGSTGSNQDPGRVWKGKRMAGHMGQTRVTTQNLEVVSTDEDRGLILVKGAVPGSKGSWIVVRDAIKSGTPEGAPRPAAVRAAESK.

Gln151 carries the N5-methylglutamine modification.

It belongs to the universal ribosomal protein uL3 family. As to quaternary structure, part of the 50S ribosomal subunit. Forms a cluster with proteins L14 and L19. Methylated by PrmB.

One of the primary rRNA binding proteins, it binds directly near the 3'-end of the 23S rRNA, where it nucleates assembly of the 50S subunit. In Rhizobium meliloti (strain 1021) (Ensifer meliloti), this protein is Large ribosomal subunit protein uL3.